The chain runs to 270 residues: Putative hydro-lyase H16_B1759 (270 aa).

This sequence belongs to the D-glutamate cyclase family.

This is Putative hydro-lyase H16_B1759 from Cupriavidus necator (strain ATCC 17699 / DSM 428 / KCTC 22496 / NCIMB 10442 / H16 / Stanier 337) (Ralstonia eutropha).